A 217-amino-acid chain; its full sequence is Pyridoxine/pyridoxamine 5'-phosphate oxidase (217 aa).

Residues 13-16 and lysine 71 contribute to the substrate site; that span reads RREY. Residues 66–71, 81–82, arginine 87, lysine 88, and glutamine 110 contribute to the FMN site; these read RIVLLK and YT. Substrate contacts are provided by tyrosine 128, arginine 132, and serine 136. FMN contacts are provided by residues 145-146 and tryptophan 190; that span reads QS. 196–198 serves as a coordination point for substrate; the sequence is RLH. Arginine 200 is an FMN binding site.

It belongs to the pyridoxamine 5'-phosphate oxidase family. Homodimer. FMN is required as a cofactor.

It catalyses the reaction pyridoxamine 5'-phosphate + O2 + H2O = pyridoxal 5'-phosphate + H2O2 + NH4(+). The enzyme catalyses pyridoxine 5'-phosphate + O2 = pyridoxal 5'-phosphate + H2O2. It functions in the pathway cofactor metabolism; pyridoxal 5'-phosphate salvage; pyridoxal 5'-phosphate from pyridoxamine 5'-phosphate: step 1/1. The protein operates within cofactor metabolism; pyridoxal 5'-phosphate salvage; pyridoxal 5'-phosphate from pyridoxine 5'-phosphate: step 1/1. Functionally, catalyzes the oxidation of either pyridoxine 5'-phosphate (PNP) or pyridoxamine 5'-phosphate (PMP) into pyridoxal 5'-phosphate (PLP). The polypeptide is Pyridoxine/pyridoxamine 5'-phosphate oxidase (Serratia proteamaculans (strain 568)).